The following is a 354-amino-acid chain: Uroporphyrinogen decarboxylase (354 aa).

Substrate is bound by residues 27–31 (RQAGR), aspartate 77, tyrosine 154, threonine 209, and histidine 327.

This sequence belongs to the uroporphyrinogen decarboxylase family. As to quaternary structure, homodimer.

It is found in the cytoplasm. The enzyme catalyses uroporphyrinogen III + 4 H(+) = coproporphyrinogen III + 4 CO2. It participates in porphyrin-containing compound metabolism; protoporphyrin-IX biosynthesis; coproporphyrinogen-III from 5-aminolevulinate: step 4/4. Functionally, catalyzes the decarboxylation of four acetate groups of uroporphyrinogen-III to yield coproporphyrinogen-III. In Klebsiella pneumoniae subsp. pneumoniae (strain ATCC 700721 / MGH 78578), this protein is Uroporphyrinogen decarboxylase.